We begin with the raw amino-acid sequence, 164 residues long: Protein-export protein SecB (164 aa).

This sequence belongs to the SecB family. In terms of assembly, homotetramer, a dimer of dimers. One homotetramer interacts with 1 SecA dimer.

The protein resides in the cytoplasm. Its function is as follows. One of the proteins required for the normal export of preproteins out of the cell cytoplasm. It is a molecular chaperone that binds to a subset of precursor proteins, maintaining them in a translocation-competent state. It also specifically binds to its receptor SecA. The sequence is that of Protein-export protein SecB from Nitrosococcus oceani (strain ATCC 19707 / BCRC 17464 / JCM 30415 / NCIMB 11848 / C-107).